Here is a 210-residue protein sequence, read N- to C-terminus: C4-dicarboxylate TRAP transporter small permease protein DctQ (210 aa).

4 consecutive transmembrane segments (helical) span residues glutamate 13–leucine 33, alanine 77–leucine 97, valine 113–serine 133, and isoleucine 160–valine 180.

The protein belongs to the TRAP transporter small permease family. The complex comprises the extracytoplasmic solute receptor protein DctP, and the two transmembrane proteins DctQ and DctM.

The protein localises to the cell inner membrane. In terms of biological role, part of the tripartite ATP-independent periplasmic (TRAP) transport system DctPQM involved in C4-dicarboxylates uptake. The protein is C4-dicarboxylate TRAP transporter small permease protein DctQ of Pseudomonas aeruginosa (strain ATCC 15692 / DSM 22644 / CIP 104116 / JCM 14847 / LMG 12228 / 1C / PRS 101 / PAO1).